The chain runs to 465 residues: Cysteine--tRNA ligase (465 aa).

C30 lines the Zn(2+) pocket. Residues 32–42 carry the 'HIGH' region motif; it reads ITVYDYCHVGH. Zn(2+)-binding residues include C214, H239, and E243. A 'KMSKS' region motif is present at residues 271-275; sequence KMSKS. K274 is an ATP binding site.

It belongs to the class-I aminoacyl-tRNA synthetase family. As to quaternary structure, monomer. Zn(2+) is required as a cofactor.

It is found in the cytoplasm. It catalyses the reaction tRNA(Cys) + L-cysteine + ATP = L-cysteinyl-tRNA(Cys) + AMP + diphosphate. The chain is Cysteine--tRNA ligase from Burkholderia cenocepacia (strain HI2424).